The following is a 253-amino-acid chain: Ipsdienol dehydrogenase (253 aa).

NAD(+)-binding positions include valine 12–asparagine 40 and aspartate 63. Serine 149 is a binding site for substrate. The Proton acceptor role is filled by tyrosine 162. Lysine 166 contributes to the NAD(+) binding site.

Belongs to the short-chain dehydrogenases/reductases (SDR) family. In terms of tissue distribution, specifically expressed in male midguts. Expressed at higher level in the anterior midgut of fed males.

The protein localises to the cytoplasm. It localises to the cytosol. It carries out the reaction (4R)-ipsdienol + NADP(+) = ipsdienone + NADPH + H(+). The catalysed reaction is (4R)-ipsdienol + NAD(+) = ipsdienone + NADH + H(+). In terms of biological role, catalyzes the oxidation of racemic ipsdienol and (4R)-(-)-ipsdienol to form ipsdienone (2-methyl-6-methylene-2,7-octadien-4-one), an intermediate in the biosynthesis of pheromonal ipsdienol in male pine engraver beetles. In contrast, (4S)-(+)-ipsdienol is not a substrate. This Ips pini (Pine engraver beetle) protein is Ipsdienol dehydrogenase.